Consider the following 216-residue polypeptide: SPbeta prophage-derived uncharacterized protein YomX (216 aa).

The polypeptide is SPbeta prophage-derived uncharacterized protein YomX (yomX) (Bacillus subtilis (strain 168)).